We begin with the raw amino-acid sequence, 334 residues long: Adenine deaminase (334 aa).

Zn(2+)-binding residues include His-17, His-19, and His-197. Glu-200 acts as the Proton donor in catalysis. Residue Asp-278 participates in Zn(2+) binding. Asp-279 contacts substrate.

Belongs to the metallo-dependent hydrolases superfamily. Adenosine and AMP deaminases family. Adenine deaminase type 2 subfamily. Requires Zn(2+) as cofactor.

It carries out the reaction adenine + H2O + H(+) = hypoxanthine + NH4(+). Functionally, catalyzes the hydrolytic deamination of adenine to hypoxanthine. Plays an important role in the purine salvage pathway and in nitrogen catabolism. In Rhodospirillum rubrum (strain ATCC 11170 / ATH 1.1.1 / DSM 467 / LMG 4362 / NCIMB 8255 / S1), this protein is Adenine deaminase.